The chain runs to 355 residues: Neurogenic differentiation factor 1 (355 aa).

A disordered region spans residues 1 to 93; that stretch reads MTKSYSESGL…GPKKKKMTKA (93 aa). The segment covering 58–77 has biased composition (acidic residues); it reads DEEDEDEDLEEEDEEEEEDD. Over residues 80 to 92 the composition is skewed to basic residues; that stretch reads PKRRGPKKKKMTK. Positions 86-92 match the Nuclear localization signal motif; sequence KKKKMTK. A bHLH domain is found at 100-152; that stretch reads LRRMKANARERNRMHGLNAALDNLRKVVPCYSKTQKLSKIETLRLAKNYIWAL. Residues Ser-161, Ser-258, Ser-265, and Ser-273 each carry the phosphoserine modification. Ser-334 carries the phosphoserine; by CaMK2 modification.

As to quaternary structure, efficient DNA-binding requires dimerization with another bHLH protein. Heterodimer with TCF3/E47; the heterodimer is inhibited in presence of ID2, but not NR0B2, to E-box element. Interacts with EP300; the interaction is inhibited by NR0B2. Interacts with RREB1. Interacts with ATOH8. Phosphorylated. In islet cells, phosphorylated on Ser-273 upon glucose stimulation; which may be required for nuclear localization. In activated neurons, phosphorylated on Ser-334; which promotes dendritic growth. Phosphorylated by MAPK1; phosphorylation regulates heterodimerization and DNA-binding activities. Phosphorylation on Ser-265 and Ser-273 increases transactivation on the insulin promoter in glucose-stimulated insulinoma cells. In terms of tissue distribution, most abundant in pancreatic alpha- and beta-cells, less in brain and intestine.

The protein resides in the cytoplasm. It localises to the nucleus. Its function is as follows. Acts as a transcriptional activator: mediates transcriptional activation by binding to E box-containing promoter consensus core sequences 5'-CANNTG-3'. Associates with the p300/CBP transcription coactivator complex to stimulate transcription of the secretin gene as well as the gene encoding the cyclin-dependent kinase inhibitor CDKN1A. Contributes to the regulation of several cell differentiation pathways, like those that promote the formation of early retinal ganglion cells, inner ear sensory neurons, granule cells forming either the cerebellum or the dentate gyrus cell layer of the hippocampus, endocrine islet cells of the pancreas and enteroendocrine cells of the small intestine. Together with PAX6 or SIX3, is required for the regulation of amacrine cell fate specification. Also required for dendrite morphogenesis and maintenance in the cerebellar cortex. Associates with chromatin to enhancer regulatory elements in genes encoding key transcriptional regulators of neurogenesis. The protein is Neurogenic differentiation factor 1 (NEUROD1) of Mesocricetus auratus (Golden hamster).